Reading from the N-terminus, the 396-residue chain is Corticosteroid-binding globulin (396 aa).

The signal sequence occupies residues 1–22 (MSLALYTCLLWLCTSGLWTAQA). N-linked (GlcNAc...) asparagine glycosylation is found at Asn-88 and Asn-216. Gln-246 serves as a coordination point for cortisol. A glycan (N-linked (GlcNAc...) asparagine) is linked at Asn-252. Position 278 (Asp-278) interacts with cortisol. Asn-319 and Asn-352 each carry an N-linked (GlcNAc...) asparagine glycan. Trp-384 provides a ligand contact to cortisol.

The protein belongs to the serpin family. As to expression, expressed by the liver; secreted in plasma.

It localises to the secreted. In terms of biological role, major transport protein for glucocorticoids and progestins in the blood of almost all vertebrate species. This is Corticosteroid-binding globulin (Serpina6) from Rattus norvegicus (Rat).